A 297-amino-acid chain; its full sequence is Protoheme IX farnesyltransferase (297 aa).

Transmembrane regions (helical) follow at residues 23-43 (VTQL…PGMP), 49-69 (VFGT…NCLI), 93-113 (IQVL…LYHL), 117-137 (LTMW…TVIL), 144-164 (NIVI…AAVA), 171-191 (AWVL…ALAL), 215-235 (RLHI…PYAI), 238-258 (SGAL…WYAW), and 275-295 (FSIL…WVGL).

This sequence belongs to the UbiA prenyltransferase family. Protoheme IX farnesyltransferase subfamily.

It localises to the cell inner membrane. The catalysed reaction is heme b + (2E,6E)-farnesyl diphosphate + H2O = Fe(II)-heme o + diphosphate. The protein operates within porphyrin-containing compound metabolism; heme O biosynthesis; heme O from protoheme: step 1/1. Functionally, converts heme B (protoheme IX) to heme O by substitution of the vinyl group on carbon 2 of heme B porphyrin ring with a hydroxyethyl farnesyl side group. In Bordetella bronchiseptica (strain ATCC BAA-588 / NCTC 13252 / RB50) (Alcaligenes bronchisepticus), this protein is Protoheme IX farnesyltransferase.